Reading from the N-terminus, the 194-residue chain is Imidazoleglycerol-phosphate dehydratase (194 aa).

It belongs to the imidazoleglycerol-phosphate dehydratase family.

The protein resides in the cytoplasm. It catalyses the reaction D-erythro-1-(imidazol-4-yl)glycerol 3-phosphate = 3-(imidazol-4-yl)-2-oxopropyl phosphate + H2O. Its pathway is amino-acid biosynthesis; L-histidine biosynthesis; L-histidine from 5-phospho-alpha-D-ribose 1-diphosphate: step 6/9. The polypeptide is Imidazoleglycerol-phosphate dehydratase (Bacillus cereus (strain B4264)).